Consider the following 445-residue polypeptide: tRNA-2-methylthio-N(6)-dimethylallyladenosine synthase (445 aa).

The region spanning 3–124 is the MTTase N-terminal domain; that stretch reads KKLYIKTYGC…LPELISKVVR (122 aa). Residues cysteine 12, cysteine 48, cysteine 87, cysteine 162, cysteine 166, and cysteine 169 each contribute to the [4Fe-4S] cluster site. The 233-residue stretch at 148–380 folds into the Radical SAM core domain; it reads YPQGTSAFIS…QQELMAQQLA (233 aa). The 63-residue stretch at 383-445 folds into the TRAM domain; sequence TSCVGSTMKV…SLNSLTGEIL (63 aa).

It belongs to the methylthiotransferase family. MiaB subfamily. In terms of assembly, monomer. The cofactor is [4Fe-4S] cluster.

Its subcellular location is the cytoplasm. The enzyme catalyses N(6)-dimethylallyladenosine(37) in tRNA + (sulfur carrier)-SH + AH2 + 2 S-adenosyl-L-methionine = 2-methylsulfanyl-N(6)-dimethylallyladenosine(37) in tRNA + (sulfur carrier)-H + 5'-deoxyadenosine + L-methionine + A + S-adenosyl-L-homocysteine + 2 H(+). Catalyzes the methylthiolation of N6-(dimethylallyl)adenosine (i(6)A), leading to the formation of 2-methylthio-N6-(dimethylallyl)adenosine (ms(2)i(6)A) at position 37 in tRNAs that read codons beginning with uridine. The protein is tRNA-2-methylthio-N(6)-dimethylallyladenosine synthase of Rickettsia conorii (strain ATCC VR-613 / Malish 7).